The sequence spans 352 residues: Small ribosomal subunit biogenesis GTPase RsgA (352 aa).

The segment covering 1 to 11 (MTKRKLSKGQQ) has biased composition (basic residues). Residues 1–35 (MTKRKLSKGQQRRVQENHKKRLQSKEKKNHVELDD) are disordered. Positions 13–33 (RVQENHKKRLQSKEKKNHVEL) are enriched in basic and acidic residues. Residues 114-276 (YYDGIKPIAA…VIDSPGVREF (163 aa)) enclose the CP-type G domain. GTP is bound by residues 162–165 (NKVD) and 216–224 (GQSGVGKSS). Residues Cys-300, Cys-305, His-307, and Cys-313 each contribute to the Zn(2+) site.

This sequence belongs to the TRAFAC class YlqF/YawG GTPase family. RsgA subfamily. Monomer. Associates with 30S ribosomal subunit, binds 16S rRNA. Requires Zn(2+) as cofactor.

The protein resides in the cytoplasm. Functionally, one of several proteins that assist in the late maturation steps of the functional core of the 30S ribosomal subunit. Helps release RbfA from mature subunits. May play a role in the assembly of ribosomal proteins into the subunit. Circularly permuted GTPase that catalyzes slow GTP hydrolysis, GTPase activity is stimulated by the 30S ribosomal subunit. This is Small ribosomal subunit biogenesis GTPase RsgA from Proteus mirabilis (strain HI4320).